A 37-amino-acid chain; its full sequence is GIFSLIKGAAQLIGKTVAKEAGKTGLELMACKVTKQC.

A disulfide bridge connects residues Cys31 and Cys37.

In terms of tissue distribution, expressed by the skin glands.

It localises to the secreted. Functionally, has antibacterial activity against the Gram-positive bacterium S.aureus ATCC 25923 (MIC=32 uM) and the Gram-negative bacterium E.coli ATCC 25726 (MIC=16 uM). The chain is Esculentin-2HSa from Odorrana hosii (Hose's rock frog).